The chain runs to 492 residues: MDPCKFRPSSSFDTKTTTTNAGAPVWNDNEALTVGPRGPILLEDYHLIEKVAHFARERIPERVVHARGASAKGFFECTHDVTDITCADFLRSPGAQTPVIVRFSTVIHERGSPETIRDPRGFAVKFYTREGNWDLLGNNFPVFFIRDGIKFPDVIHAFKPNPRSHVQEYWRVFDFLSHHPESLHTFFFLFDDVGIPTDYRHMDGFGVNTYTFVTRDAKARYVKFHWKPTCGVSCLMDDEATLVGGKNHSHATQDLYDSIAAGNFPEWKLFVQVIDPEEEERFDFDPLDDTKTWPEDEVPLRPVGRLVLNRNVDNFFNENEQLAFGPGLVVPGIYYSDDKMLQCRVFAYADTQRYRLGPNYLMLPVNAPKCAHHNNHYDGAMNFMHRDEEVDYYPSRHAPLRHAPPTPITPRPVVGRRQKATIHKQNDFKQPGERYRSWAPDRQERFIRRFAGELAHPKVSPELRAIWVNYLSQCDESLGVKIANRLNVKPSM.

The disordered stretch occupies residues 1-23 (MDPCKFRPSSSFDTKTTTTNAGA). Residues 8–21 (PSSSFDTKTTTTNA) are compositionally biased toward polar residues. Residues His-65 and Asn-138 contribute to the active site. Heme is bound at residue Tyr-348.

This sequence belongs to the catalase family. Homotetramer. It depends on heme as a cofactor.

It is found in the peroxisome. The protein localises to the glyoxysome. It carries out the reaction 2 H2O2 = O2 + 2 H2O. In terms of biological role, occurs in almost all aerobically respiring organisms and serves to protect cells from the toxic effects of hydrogen peroxide. This chain is Catalase isozyme A, found in Oryza sativa subsp. indica (Rice).